The sequence spans 238 residues: Ribonuclease PH (238 aa).

Residues Arg-86 and 124–126 (GTR) contribute to the phosphate site.

The protein belongs to the RNase PH family. In terms of assembly, homohexameric ring arranged as a trimer of dimers.

It carries out the reaction tRNA(n+1) + phosphate = tRNA(n) + a ribonucleoside 5'-diphosphate. Its function is as follows. Phosphorolytic 3'-5' exoribonuclease that plays an important role in tRNA 3'-end maturation. Removes nucleotide residues following the 3'-CCA terminus of tRNAs; can also add nucleotides to the ends of RNA molecules by using nucleoside diphosphates as substrates, but this may not be physiologically important. Probably plays a role in initiation of 16S rRNA degradation (leading to ribosome degradation) during starvation. The chain is Ribonuclease PH from Photobacterium profundum (strain SS9).